We begin with the raw amino-acid sequence, 217 residues long: Cytidylate kinase (217 aa).

Gly-9–Ser-17 lines the ATP pocket.

The protein belongs to the cytidylate kinase family. Type 1 subfamily.

It localises to the cytoplasm. It carries out the reaction CMP + ATP = CDP + ADP. It catalyses the reaction dCMP + ATP = dCDP + ADP. The sequence is that of Cytidylate kinase from Mycoplasma genitalium (strain ATCC 33530 / DSM 19775 / NCTC 10195 / G37) (Mycoplasmoides genitalium).